We begin with the raw amino-acid sequence, 452 residues long: Gastrin/cholecystokinin type B receptor (452 aa).

Topologically, residues 1–55 (MELVKLNRSVQGSGPVASLCRPGGPLLNNSGTGNLSCEPPRIRGAGTRELELAIR) are extracellular. N-linked (GlcNAc...) asparagine glycosylation is found at N7, N28, and N34. The helical transmembrane segment at 56 to 77 (VTLYAVIFLMSVGGNILIIVVL) threads the bilayer. Topologically, residues 78–85 (GLSRRLRT) are cytoplasmic. A helical transmembrane segment spans residues 86 to 107 (VTNAFLLSLAVSDLLLAVACMP). Topologically, residues 108-129 (FTLLPNLMGTFIFGTVICKAVS) are extracellular. A disulfide bridge connects residues C125 and C203. The helical transmembrane segment at 130–148 (YLMGVSVSVSTLSLVAIAL) threads the bilayer. Topologically, residues 149–168 (ERYSAICRPLQARVWQTRSH) are cytoplasmic. The chain crosses the membrane as a helical span at residues 169 to 187 (AARVILATWLLSGLLMVPY). At 188–217 (PVYTAVQPVGPRVLQCVHRWPSARVRQTWS) the chain is on the extracellular side. A helical transmembrane segment spans residues 218-240 (VLLLLLLFFVPGVVMAVAYGLIS). Topologically, residues 241-338 (RELYLGLRFD…KLLAKKRVVR (98 aa)) are cytoplasmic. The interval 255-285 (SESQSRVRGQGGLPGGAAPGPVHQNGRCRPE) is disordered. Gly residues predominate over residues 263 to 272 (GQGGLPGGAA). The helical transmembrane segment at 339 to 360 (MLLVIVVLFFMCWLPVYSANTW) threads the bilayer. Residues 361 to 378 (RAFDGPGAHRALSGAPIS) lie on the Extracellular side of the membrane. Residues 379 to 399 (FIHLLSYASACVNPLVYCFMH) traverse the membrane as a helical segment. Over 400–452 (RRFRQACLDTCARCCPRPPRARPRPLPDEDPPTPSIASLSRLSYTTISTLGPG) the chain is Cytoplasmic. C413 is lipidated: S-palmitoyl cysteine.

The protein belongs to the G-protein coupled receptor 1 family.

The protein resides in the cell membrane. In terms of biological role, receptor for gastrin and cholecystokinin. The CCK-B receptors occur throughout the central nervous system where they modulate anxiety, analgesia, arousal, and neuroleptic activity. This receptor mediates its action by association with G proteins that activate a phosphatidylinositol-calcium second messenger system. This chain is Gastrin/cholecystokinin type B receptor (CCKBR), found in Oryctolagus cuniculus (Rabbit).